The chain runs to 123 residues: Large ribosomal subunit protein bL12 (123 aa).

This sequence belongs to the bacterial ribosomal protein bL12 family. Homodimer. Part of the ribosomal stalk of the 50S ribosomal subunit. Forms a multimeric L10(L12)X complex, where L10 forms an elongated spine to which 2 to 4 L12 dimers bind in a sequential fashion. Binds GTP-bound translation factors.

Functionally, forms part of the ribosomal stalk which helps the ribosome interact with GTP-bound translation factors. Is thus essential for accurate translation. In Dechloromonas aromatica (strain RCB), this protein is Large ribosomal subunit protein bL12.